We begin with the raw amino-acid sequence, 136 residues long: Ribulose bisphosphate carboxylase small subunit, chloroplastic 1 (136 aa).

Residues 1–13 constitute a chloroplast transit peptide; the sequence is NTDITSNGERVKC.

Belongs to the RuBisCO small chain family. As to quaternary structure, heterohexadecamer of 8 large and 8 small subunits.

It is found in the plastid. The protein localises to the chloroplast. Functionally, ruBisCO catalyzes two reactions: the carboxylation of D-ribulose 1,5-bisphosphate, the primary event in carbon dioxide fixation, as well as the oxidative fragmentation of the pentose substrate. Both reactions occur simultaneously and in competition at the same active site. Although the small subunit is not catalytic it is essential for maximal activity. The polypeptide is Ribulose bisphosphate carboxylase small subunit, chloroplastic 1 (Pisum sativum (Garden pea)).